We begin with the raw amino-acid sequence, 580 residues long: NADH-quinone oxidoreductase subunit C/D (580 aa).

Positions 1 to 171 (MSFDQVIADA…PPFVLTDRLF (171 aa)) are NADH dehydrogenase I subunit C. The NADH dehydrogenase I subunit D stretch occupies residues 195-580 (ELMVLNFGPH…IDFVMSDVDR (386 aa)).

This sequence in the N-terminal section; belongs to the complex I 30 kDa subunit family. The protein in the C-terminal section; belongs to the complex I 49 kDa subunit family. In terms of assembly, NDH-1 is composed of 13 different subunits. Subunits NuoB, CD, E, F, and G constitute the peripheral sector of the complex.

It is found in the cell inner membrane. The catalysed reaction is a quinone + NADH + 5 H(+)(in) = a quinol + NAD(+) + 4 H(+)(out). Its function is as follows. NDH-1 shuttles electrons from NADH, via FMN and iron-sulfur (Fe-S) centers, to quinones in the respiratory chain. The immediate electron acceptor for the enzyme in this species is believed to be ubiquinone. Couples the redox reaction to proton translocation (for every two electrons transferred, four hydrogen ions are translocated across the cytoplasmic membrane), and thus conserves the redox energy in a proton gradient. The chain is NADH-quinone oxidoreductase subunit C/D from Cereibacter sphaeroides (strain ATCC 17025 / ATH 2.4.3) (Rhodobacter sphaeroides).